The sequence spans 490 residues: UDP-glycosyltransferase 86A1 (490 aa).

UDP-alpha-D-glucose contacts are provided by residues Ser-294, 352-354 (CCQ), 369-377 (HCGWNSILE), and 391-394 (LTDQ).

The protein belongs to the UDP-glycosyltransferase family.

The sequence is that of UDP-glycosyltransferase 86A1 (UGT86A1) from Arabidopsis thaliana (Mouse-ear cress).